The following is a 399-amino-acid chain: Probable F-box protein At4g22060 (399 aa).

The 37-residue stretch at 12 to 48 folds into the F-box domain; it reads SWSKLPLDLLIMVFERLGFVDFQRTKSVCLAWLYASR.

This Arabidopsis thaliana (Mouse-ear cress) protein is Probable F-box protein At4g22060.